Consider the following 537-residue polypeptide: Bifunctional purine biosynthesis protein PurH (537 aa).

The MGS-like domain maps to 11–158 (ADIQRVRRAL…KNHAYVGVIV (148 aa)).

Belongs to the PurH family.

The catalysed reaction is (6R)-10-formyltetrahydrofolate + 5-amino-1-(5-phospho-beta-D-ribosyl)imidazole-4-carboxamide = 5-formamido-1-(5-phospho-D-ribosyl)imidazole-4-carboxamide + (6S)-5,6,7,8-tetrahydrofolate. The enzyme catalyses IMP + H2O = 5-formamido-1-(5-phospho-D-ribosyl)imidazole-4-carboxamide. The protein operates within purine metabolism; IMP biosynthesis via de novo pathway; 5-formamido-1-(5-phospho-D-ribosyl)imidazole-4-carboxamide from 5-amino-1-(5-phospho-D-ribosyl)imidazole-4-carboxamide (10-formyl THF route): step 1/1. It functions in the pathway purine metabolism; IMP biosynthesis via de novo pathway; IMP from 5-formamido-1-(5-phospho-D-ribosyl)imidazole-4-carboxamide: step 1/1. The polypeptide is Bifunctional purine biosynthesis protein PurH (Parvibaculum lavamentivorans (strain DS-1 / DSM 13023 / NCIMB 13966)).